The sequence spans 720 residues: Aminopeptidase RNPEPL1 (720 aa).

Substrate is bound at residue 321-325; it reads VAMEN. Residue H348 coordinates Zn(2+). The active-site Proton acceptor is E349. Zn(2+) contacts are provided by H352 and E371. The interval 671–708 is disordered; it reads GLGPSAEPSTEPSTDLGGAEADTNPDSPALLLGDEAPS.

This sequence belongs to the peptidase M1 family. Requires Zn(2+) as cofactor.

The catalysed reaction is Release of N-terminal amino acids, preferentially methionine, from peptides and arylamides.. Functionally, broad specificity aminopeptidase which preferentially hydrolyzes an N-terminal methionine, citrulline or glutamine. The polypeptide is Aminopeptidase RNPEPL1 (Mus musculus (Mouse)).